The chain runs to 300 residues: ESX-5 secretion-associated protein EspG5 (300 aa).

This sequence belongs to the EspG family. As to quaternary structure, interacts specifically with ESX-5-dependent PE/PPE proteins. Forms a 1:1:1 heterotrimeric complex with the PE25/PPE41 dimer, via PPE41. Binding of EspG5 does not cause conformational changes in the PE25/PPE41 dimer. Forms a 1:1:1 heterotrimeric complex with the PE8/PPE15 dimer, via PPE15.

It localises to the cytoplasm. Functionally, specific chaperone for cognate PE/PPE proteins. Plays an important role in preventing aggregation of PE/PPE dimers. This Mycobacterium tuberculosis (strain ATCC 25618 / H37Rv) protein is ESX-5 secretion-associated protein EspG5.